The following is a 68-amino-acid chain: Large ribosomal subunit protein bL35 (68 aa).

Residues 1 to 25 (MGTKIKTHKGTKKRFRLSAKGKAMH) are compositionally biased toward basic residues. A disordered region spans residues 1–43 (MGTKIKTHKGTKKRFRLSAKGKAMHRQSGTSHLAKGLSKKRRR).

Belongs to the bacterial ribosomal protein bL35 family.

This Rhodopirellula baltica (strain DSM 10527 / NCIMB 13988 / SH1) protein is Large ribosomal subunit protein bL35.